The chain runs to 620 residues: Glutathione-regulated potassium-efflux system protein KefC (620 aa).

Transmembrane regions (helical) follow at residues 4-24, 26-46, 54-74, 90-110, 114-134, 149-169, 178-198, 218-238, 270-290, 294-314, 327-347, and 359-379; these read HTLI…PIAV, LGLG…PWGL, SILH…GLEL, GALQ…LLGL, VAEL…MQAM, FAVL…IPLL, MGAF…VVLL, VFSA…EEVG, GLLL…GTLL, LRIV…LWLI, WFAV…GAAQ, and SLTL…VILN. An RCK N-terminal domain is found at 399–518; that stretch reads QPRVIIAGFG…AGVEKPERET (120 aa). The interval 597–620 is disordered; sequence GWQGTEEGKHTGNMADEPETKPSS.

This sequence belongs to the monovalent cation:proton antiporter 2 (CPA2) transporter (TC 2.A.37) family. KefC subfamily. In terms of assembly, homodimer. Interacts with the regulatory subunit KefF.

The protein localises to the cell inner membrane. Pore-forming subunit of a potassium efflux system that confers protection against electrophiles. Catalyzes K(+)/H(+) antiport. In Escherichia coli O6:K15:H31 (strain 536 / UPEC), this protein is Glutathione-regulated potassium-efflux system protein KefC.